A 562-amino-acid chain; its full sequence is Methionine--tRNA ligase, mitochondrial (562 aa).

A mitochondrion-targeting transit peptide spans M1–F10. Residues F43–H53 carry the 'HIGH' region motif. The short motif at K332–S336 is the 'KMSKS' region element. Position 335 (K335) interacts with ATP.

Belongs to the class-I aminoacyl-tRNA synthetase family.

It is found in the mitochondrion matrix. It catalyses the reaction tRNA(Met) + L-methionine + ATP = L-methionyl-tRNA(Met) + AMP + diphosphate. The polypeptide is Methionine--tRNA ligase, mitochondrial (mars2) (Xenopus laevis (African clawed frog)).